The sequence spans 185 residues: Prenylated Rab acceptor protein 1 (185 aa).

At Met-1 to Tyr-78 the chain is on the cytoplasmic side. The interval Ala-30–Phe-54 is required for interaction with prenylated RAB3A and VAMP2. Transmembrane regions (helical) follow at residues Val-79 to Pro-94 and Met-95 to Leu-112. Over Arg-113–Gln-131 the chain is Cytoplasmic. Helical transmembrane passes span Tyr-132–Ala-148 and Gly-149–Ser-165. The segment at Ser-165 to Val-185 is required for interaction with GDI1. The Cytoplasmic segment spans residues His-166–Val-185. The tract at residues Ala-175–Val-185 is required for interaction with prenylated RAB3A and VAMP2. The tract at residues Ala-175 to Val-185 is homodimerization.

The protein belongs to the PRA1 family. In terms of assembly, homodimer. Interacts with VAMP2 (synaptobrevin-2), GDI1, NRDG1 and PCLO. Interacts with prenylated Rab proteins (including RAB5 and RAB6), and with the members of the Ras superfamily HRAS, RHOA, TC21, and RAP1A.

The protein resides in the cell membrane. It is found in the cytoplasm. It localises to the golgi apparatus. The protein localises to the cytoplasmic vesicle. Its subcellular location is the secretory vesicle. The protein resides in the synaptic vesicle. Its function is as follows. General Rab protein regulator required for vesicle formation from the Golgi complex. May control vesicle docking and fusion by mediating the action of Rab GTPases to the SNARE complexes. In addition it inhibits the removal of Rab GTPases from the membrane by GDI1. The chain is Prenylated Rab acceptor protein 1 (Rabac1) from Mus musculus (Mouse).